A 324-amino-acid polypeptide reads, in one-letter code: Putative divalent cation/proton antiporter TMEM165 (324 aa).

A signal peptide spans Met-1–Ala-33. Residues Gly-34–Thr-89 are Lumenal-facing. Positions Pro-35–Glu-45 are enriched in basic and acidic residues. The tract at residues Pro-35–Ala-59 is disordered. Over residues Ala-50–Ala-59 the composition is skewed to low complexity. Residues Asn-90–Gly-110 form a helical membrane-spanning segment. Residues Asp-111–Arg-126 are Cytoplasmic-facing. A helical transmembrane segment spans residues Leu-127–Phe-147. The Lumenal portion of the chain corresponds to Gly-148–Thr-151. The helical transmembrane segment at Thr-152–Ile-172 threads the bilayer. Over Arg-173–Lys-228 the chain is Cytoplasmic. The stretch at Asp-184–Asn-211 forms a coiled coil. A helical transmembrane segment spans residues Trp-229–Trp-249. At Gly-250–Tyr-267 the chain is on the lumenal side. The chain crosses the membrane as a helical span at residues Gly-268–Gly-288. Over Arg-289–Thr-299 the chain is Cytoplasmic. The chain crosses the membrane as a helical span at residues Val-300–Pro-320. At Asp-321–Phe-324 the chain is on the lumenal side.

It belongs to the GDT1 family. As to expression, ubiquitously expressed.

It is found in the golgi apparatus membrane. The catalysed reaction is Ca(2+)(in) + n H(+)(out) = Ca(2+)(out) + n H(+)(in). It catalyses the reaction Mn(2+)(in) + n H(+)(out) = Mn(2+)(out) + n H(+)(in). In terms of biological role, putative divalent cation:proton antiporter that exchanges calcium or manganese ions for protons across the Golgi membrane. Mediates the reversible transport of calcium or manganese to the Golgi lumen driven by the proton gradient and possibly the membrane potential generated by V-ATPase. Provides calcium or manganese cofactors to resident Golgi enzymes and contributes to the maintenance of an acidic luminal Golgi pH required for proper functioning of the secretory pathway. Promotes Ca(2+) storage within the Golgi lumen of the mammary epithelial cells to be then secreted into milk. The transport mechanism and stoichiometry remains to be elucidated. The polypeptide is Putative divalent cation/proton antiporter TMEM165 (Homo sapiens (Human)).